We begin with the raw amino-acid sequence, 164 residues long: Ubiquitin-fold modifier-conjugating enzyme 1 (164 aa).

The Glycyl thioester intermediate role is filled by C116.

The protein belongs to the ubiquitin-conjugating enzyme family. UFC1 subfamily.

Its function is as follows. E2-like enzyme which forms an intermediate with UFM1 via a thioester linkage. This chain is Ubiquitin-fold modifier-conjugating enzyme 1, found in Drosophila willistoni (Fruit fly).